We begin with the raw amino-acid sequence, 1524 residues long: DNA-directed RNA polymerase subunit beta' (1524 aa).

Residues Cys58, Cys60, Cys73, and Cys76 each coordinate Zn(2+). Residues Asp739, Asp741, and Asp743 each contribute to the Mg(2+) site. Cys1112, Cys1194, Cys1201, and Cys1204 together coordinate Zn(2+). A disordered region spans residues 1501 to 1524 (EAVEAKERPAARRGVKREQPGKQA).

It belongs to the RNA polymerase beta' chain family. As to quaternary structure, the RNAP catalytic core consists of 2 alpha, 1 beta, 1 beta' and 1 omega subunit. When a sigma factor is associated with the core the holoenzyme is formed, which can initiate transcription. The cofactor is Mg(2+). Requires Zn(2+) as cofactor.

It catalyses the reaction RNA(n) + a ribonucleoside 5'-triphosphate = RNA(n+1) + diphosphate. In terms of biological role, DNA-dependent RNA polymerase catalyzes the transcription of DNA into RNA using the four ribonucleoside triphosphates as substrates. This Thermus thermophilus (strain ATCC BAA-163 / DSM 7039 / HB27) protein is DNA-directed RNA polymerase subunit beta'.